We begin with the raw amino-acid sequence, 283 residues long: ATP synthase gamma chain (283 aa).

The protein belongs to the ATPase gamma chain family. As to quaternary structure, F-type ATPases have 2 components, CF(1) - the catalytic core - and CF(0) - the membrane proton channel. CF(1) has five subunits: alpha(3), beta(3), gamma(1), delta(1), epsilon(1). CF(0) has three main subunits: a, b and c.

The protein resides in the cell membrane. Its function is as follows. Produces ATP from ADP in the presence of a proton gradient across the membrane. The gamma chain is believed to be important in regulating ATPase activity and the flow of protons through the CF(0) complex. The sequence is that of ATP synthase gamma chain from Exiguobacterium sibiricum (strain DSM 17290 / CCUG 55495 / CIP 109462 / JCM 13490 / 255-15).